Here is a 1938-residue protein sequence, read N- to C-terminus: Histone-lysine N-methyltransferase SETD1B (1938 aa).

The segment covering 1–20 (MSFKEAKPGERGKNPEDHGR) has biased composition (basic and acidic residues). The disordered stretch occupies residues 1–44 (MSFKEAKPGERGKNPEDHGRKQAASWMNGMEAANQPSTSAEKKS). In terms of domain architecture, RRM spans 111-199 (DEFYVGPVPP…NIIHAELDTK (89 aa)). Disordered stretches follow at residues 226–357 (LDAS…ENTF), 369–484 (FPRT…TRIA), 496–630 (LISS…EVTP), 652–688 (GFPP…VPPP), 916–1125 (KEPP…SSPV), 1147–1174 (HQTA…HKQD), 1187–1206 (MQQN…NEEE), 1327–1373 (KTLS…GNSL), 1413–1468 (FPES…VPHM), 1496–1528 (ECEF…PKKP), and 1744–1772 (DEPP…RRSE). 4 stretches are compositionally biased toward polar residues: residues 254-290 (VTPN…QGTP), 298-312 (PFSQ…QTTP), 375-407 (LSHS…PQTS), and 446-457 (DSTTEQKASFAQ). Residues 512–531 (SPISSSSSQLSPIPPYSSSS) are compositionally biased toward low complexity. Polar residues-rich tracts occupy residues 532 to 546 (HYQD…SSTG) and 569 to 585 (SLCQ…QINQ). Over residues 588-599 (RKMETLDNKELV) the composition is skewed to basic and acidic residues. The span at 619–628 (EDMEISDDEV) shows a compositional bias: acidic residues. 2 stretches are compositionally biased toward acidic residues: residues 976-990 (SEGE…DDGE) and 1054-1114 (DSSD…EDFF). The span at 1159–1174 (KDLDVPLVESKEHKQD) shows a compositional bias: basic and acidic residues. A compositionally biased stretch (basic and acidic residues) spans 1329–1343 (LSEEELPRTPGRDIL). 2 stretches are compositionally biased toward polar residues: residues 1349–1358 (LGKSQSTETI) and 1441–1453 (EPTS…NSVP). Pro residues predominate over residues 1454 to 1464 (SPIPFASPPRG). The span at 1751-1765 (QGKSIPAQPQASTRA) shows a compositional bias: polar residues. Positions 1770–1775 (RSEQRR) match the RxxxRR motif motif. The 118-residue stretch at 1799-1916 (KKIRFCKSHI…VNEEITYDYK (118 aa)) folds into the SET domain. Position 1915 (Tyr-1915) interacts with S-adenosyl-L-methionine. One can recognise a Post-SET domain in the interval 1922–1938 (VKIPCLCGAENCRGTLN).

This sequence belongs to the class V-like SAM-binding methyltransferase superfamily. Component of the SET1B/COMPASS complex.

Its subcellular location is the nucleus speckle. The protein localises to the chromosome. It catalyses the reaction L-lysyl(4)-[histone H3] + 3 S-adenosyl-L-methionine = N(6),N(6),N(6)-trimethyl-L-lysyl(4)-[histone H3] + 3 S-adenosyl-L-homocysteine + 3 H(+). In terms of biological role, histone methyltransferase that specifically methylates 'Lys-4' of histone H3, when part of the SET1 histone methyltransferase (HMT) complex, but not if the neighboring 'Lys-9' residue is already methylated. H3 'Lys-4' methylation represents a specific tag for epigenetic transcriptional activation. The polypeptide is Histone-lysine N-methyltransferase SETD1B (setd1b) (Xenopus laevis (African clawed frog)).